The following is a 30-amino-acid chain: GWKDWAKKAGGWLKKKGPGMAKAALKAAMQ.

In terms of tissue distribution, expressed by the venom gland.

It is found in the secreted. Shows a broad spectrum of activity against both Gram-positive and Gram-negative bacteria. Also has antimicrobial activity against S.cerevisiae. Has insecticidal and non-hemolytic activity. The polypeptide is M-poneritoxin-Ng3a (Neoponera goeldii (Ponerine ant)).